A 92-amino-acid chain; its full sequence is Small ribosomal subunit protein uS19 (92 aa).

The protein belongs to the universal ribosomal protein uS19 family.

Functionally, protein S19 forms a complex with S13 that binds strongly to the 16S ribosomal RNA. In Photobacterium profundum (strain SS9), this protein is Small ribosomal subunit protein uS19.